A 205-amino-acid chain; its full sequence is Large ribosomal subunit protein uL4 (205 aa).

The tract at residues 43 to 95 (RSGNRAQKDRAEVKHSTKKPWRQKGTGRARAGMTSSPLWRGGGRAFPNSPEEN) is disordered. A compositionally biased stretch (basic and acidic residues) spans 48–57 (AQKDRAEVKH). The segment covering 58–69 (STKKPWRQKGTG) has biased composition (basic residues).

This sequence belongs to the universal ribosomal protein uL4 family. Part of the 50S ribosomal subunit.

Functionally, one of the primary rRNA binding proteins, this protein initially binds near the 5'-end of the 23S rRNA. It is important during the early stages of 50S assembly. It makes multiple contacts with different domains of the 23S rRNA in the assembled 50S subunit and ribosome. Its function is as follows. Forms part of the polypeptide exit tunnel. The polypeptide is Large ribosomal subunit protein uL4 (Bordetella bronchiseptica (strain ATCC BAA-588 / NCTC 13252 / RB50) (Alcaligenes bronchisepticus)).